A 67-amino-acid polypeptide reads, in one-letter code: Beta-defensin 14 (67 aa).

The N-terminal stretch at 1–22 is a signal peptide; that stretch reads MRLHYLLFVFLILFLVPAPGDA. Intrachain disulfides connect Cys-33-Cys-62, Cys-40-Cys-55, and Cys-45-Cys-63.

This sequence belongs to the beta-defensin family.

The protein localises to the secreted. Has antibacterial activity. The polypeptide is Beta-defensin 14 (Defb14) (Mus musculus (Mouse)).